The following is a 215-amino-acid chain: Large ribosomal subunit protein uL3 (215 aa).

Over residues 131–144 (SSSRASHGNSRSHN) the composition is skewed to low complexity. The segment at 131–150 (SSSRASHGNSRSHNVPGSIG) is disordered. Residue Gln153 is modified to N5-methylglutamine.

Belongs to the universal ribosomal protein uL3 family. In terms of assembly, part of the 50S ribosomal subunit. Forms a cluster with proteins L14 and L19. In terms of processing, methylated by PrmB.

Its function is as follows. One of the primary rRNA binding proteins, it binds directly near the 3'-end of the 23S rRNA, where it nucleates assembly of the 50S subunit. The sequence is that of Large ribosomal subunit protein uL3 from Nitrosomonas europaea (strain ATCC 19718 / CIP 103999 / KCTC 2705 / NBRC 14298).